The chain runs to 191 residues: Thymidine kinase (191 aa).

ATP is bound by residues 15–22 (GSMFSGKS) and 88–91 (DEVQ). Residue Glu89 is the Proton acceptor of the active site. Residues Cys145, Cys148, Cys183, and His186 each coordinate Zn(2+).

Belongs to the thymidine kinase family. As to quaternary structure, homotetramer.

Its subcellular location is the cytoplasm. It carries out the reaction thymidine + ATP = dTMP + ADP + H(+). This Macrococcus caseolyticus (strain JCSC5402) (Macrococcoides caseolyticum) protein is Thymidine kinase.